Consider the following 89-residue polypeptide: Small ribosomal subunit protein uS15 (89 aa).

The protein belongs to the universal ribosomal protein uS15 family. In terms of assembly, part of the 30S ribosomal subunit. Forms a bridge to the 50S subunit in the 70S ribosome, contacting the 23S rRNA.

Its function is as follows. One of the primary rRNA binding proteins, it binds directly to 16S rRNA where it helps nucleate assembly of the platform of the 30S subunit by binding and bridging several RNA helices of the 16S rRNA. Functionally, forms an intersubunit bridge (bridge B4) with the 23S rRNA of the 50S subunit in the ribosome. This chain is Small ribosomal subunit protein uS15, found in Methylocella silvestris (strain DSM 15510 / CIP 108128 / LMG 27833 / NCIMB 13906 / BL2).